The chain runs to 547 residues: Mercuric reductase (547 aa).

In terms of domain architecture, HMA spans 4 to 67 (NSYKIPIQGM…NISAAGYQPG (64 aa)). Positions 15 and 18 each coordinate a metal cation. FAD-binding residues include Ala97, Gly117, and Thr122. Residues Cys123 and Cys128 are joined by a disulfide bond. 4 residues coordinate FAD: Lys132, Ala196, Asp388, and Val396. Residues Cys544 and Cys545 each coordinate Hg(2+).

The protein belongs to the class-I pyridine nucleotide-disulfide oxidoreductase family. In terms of assembly, homodimer. It depends on FAD as a cofactor.

The enzyme catalyses Hg + NADP(+) + H(+) = Hg(2+) + NADPH. Functionally, resistance to Hg(2+) in bacteria appears to be governed by a specialized system which includes mercuric reductase. MerA protein is responsible for volatilizing mercury as Hg(0). This chain is Mercuric reductase (merA), found in Staphylococcus aureus.